Reading from the N-terminus, the 562-residue chain is Actin-related protein 8 (562 aa).

248-251 (DVGD) lines the ATP pocket.

The protein belongs to the actin family. ARP8 subfamily. Component of the chromatin remodeling Ino80 complex. Exists as monomers and dimers, but the dimer is most probably the biologically relevant form required for stable interactions with histones that exploits the twofold symmetry of the nucleosome core.

The protein resides in the nucleus. Its function is as follows. Plays an important role in the functional organization of mitotic chromosomes. Exhibits low basal ATPase activity, and unable to polymerize. In terms of biological role, proposed core component of the chromatin remodeling INO80 complex which is involved in transcriptional regulation, DNA replication and probably DNA repair. Strongly prefer nucleosomes and H3-H4 tetramers over H2A-H2B dimers, suggesting it may act as a nucleosome recognition module within the complex. This is Actin-related protein 8 from Aedes aegypti (Yellowfever mosquito).